A 576-amino-acid polypeptide reads, in one-letter code: Beta-bisabolene synthase (576 aa).

(2E,6E)-farnesyl diphosphate contacts are provided by Arg-286, Asp-323, Asp-327, Arg-466, and Asn-469. 2 residues coordinate Mg(2+): Asp-323 and Asp-327. A DDXXD motif motif is present at residues 323–327; the sequence is DDVYD. Residues Asn-469, Thr-473, and Glu-477 each contribute to the Mg(2+) site.

It belongs to the terpene synthase family. Tpsb subfamily. Mg(2+) is required as a cofactor. Mn(2+) serves as cofactor.

Its function is as follows. Produces almost exclusively beta-bisabolene and only traces of alpha-bisabolol from (2E,6E)-farnesyl diphosphate in fragrance biosynthesis. In Santalum austrocaledonicum (Sandalwood), this protein is Beta-bisabolene synthase.